A 387-amino-acid chain; its full sequence is Exodeoxyribonuclease 7 large subunit (387 aa).

The protein belongs to the XseA family. In terms of assembly, heterooligomer composed of large and small subunits.

Its subcellular location is the cytoplasm. It catalyses the reaction Exonucleolytic cleavage in either 5'- to 3'- or 3'- to 5'-direction to yield nucleoside 5'-phosphates.. Functionally, bidirectionally degrades single-stranded DNA into large acid-insoluble oligonucleotides, which are then degraded further into small acid-soluble oligonucleotides. This is Exodeoxyribonuclease 7 large subunit from Synechococcus sp. (strain CC9605).